Here is a 595-residue protein sequence, read N- to C-terminus: Aspartate--tRNA(Asp/Asn) ligase (595 aa).

Residue E175 coordinates L-aspartate. The aspartate stretch occupies residues 199 to 202 (QQYK). L-aspartate contacts are provided by R221 and H454. Position 221–223 (221–223 (RDE)) interacts with ATP. Residue E488 coordinates ATP. L-aspartate is bound at residue R495. Residue 540–543 (GIDR) coordinates ATP.

The protein belongs to the class-II aminoacyl-tRNA synthetase family. Type 1 subfamily. Homodimer.

It localises to the cytoplasm. The catalysed reaction is tRNA(Asx) + L-aspartate + ATP = L-aspartyl-tRNA(Asx) + AMP + diphosphate. Its function is as follows. Aspartyl-tRNA synthetase with relaxed tRNA specificity since it is able to aspartylate not only its cognate tRNA(Asp) but also tRNA(Asn). Reaction proceeds in two steps: L-aspartate is first activated by ATP to form Asp-AMP and then transferred to the acceptor end of tRNA(Asp/Asn). In Brucella anthropi (strain ATCC 49188 / DSM 6882 / CCUG 24695 / JCM 21032 / LMG 3331 / NBRC 15819 / NCTC 12168 / Alc 37) (Ochrobactrum anthropi), this protein is Aspartate--tRNA(Asp/Asn) ligase.